The following is an 828-amino-acid chain: Molybdenum cofactor sulfurase (828 aa).

N6-(pyridoxal phosphate)lysine is present on Lys-239. Residue Cys-402 is part of the active site. Positions 638–682 are disordered; sequence TRYTRRSLHSRSSTAALRRQRPVEESSMPGSFPSDTPLSRTPEPP. The MOSC domain occupies 652-825; sequence AALRRQRPVE…VMVGDVVRPW (174 aa).

This sequence belongs to the class-V pyridoxal-phosphate-dependent aminotransferase family. MOCOS subfamily. Requires pyridoxal 5'-phosphate as cofactor.

It catalyses the reaction Mo-molybdopterin + L-cysteine + AH2 = thio-Mo-molybdopterin + L-alanine + A + H2O. In terms of biological role, sulfurates the molybdenum cofactor. Sulfation of molybdenum is essential for xanthine dehydrogenase (XDH) and aldehyde oxidase (ADO) enzymes in which molybdenum cofactor is liganded by 1 oxygen and 1 sulfur atom in active form. In Aspergillus terreus (strain NIH 2624 / FGSC A1156), this protein is Molybdenum cofactor sulfurase.